Consider the following 279-residue polypeptide: MNAPARPVRSQYEDFMRHVYTHGVAKGDRTGTGTRSVFGYQMRFDLNEGFPLVTTKKVHLKSIITELLWFLTGSSSNHWLKERGVTIWDEWAREDGDLGPVYGVQWRSWPTPDGGHIDQISQVVETLRTHPDSRRIIVSAWNVADLDKMALMPCHAFFQFYVAPPQAAGERGKLSCQLYQRSADIFLGVPFNIASYALLTHMMAQQCNLEVGDFIWTGGDCHIYSNHFEQVELQLSRAPHPYPTLHILRRPDSLFDYRFEDFEVRDYAHHPAIKAPVAV.

Arginine 29 is a dUMP binding site. Histidine 59 provides a ligand contact to (6R)-5,10-methylene-5,6,7,8-tetrahydrofolate. Position 134 to 135 (134 to 135) interacts with dUMP; that stretch reads RR. Cysteine 154 functions as the Nucleophile in the catalytic mechanism. DUMP is bound by residues 181–184, asparagine 192, and 222–224; these read RSAD and HIY. Aspartate 184 serves as a coordination point for (6R)-5,10-methylene-5,6,7,8-tetrahydrofolate. Alanine 278 provides a ligand contact to (6R)-5,10-methylene-5,6,7,8-tetrahydrofolate.

Belongs to the thymidylate synthase family. Bacterial-type ThyA subfamily. In terms of assembly, homodimer.

The protein localises to the cytoplasm. The enzyme catalyses dUMP + (6R)-5,10-methylene-5,6,7,8-tetrahydrofolate = 7,8-dihydrofolate + dTMP. Its pathway is pyrimidine metabolism; dTTP biosynthesis. Catalyzes the reductive methylation of 2'-deoxyuridine-5'-monophosphate (dUMP) to 2'-deoxythymidine-5'-monophosphate (dTMP) while utilizing 5,10-methylenetetrahydrofolate (mTHF) as the methyl donor and reductant in the reaction, yielding dihydrofolate (DHF) as a by-product. This enzymatic reaction provides an intracellular de novo source of dTMP, an essential precursor for DNA biosynthesis. The polypeptide is Thymidylate synthase (Paracidovorax citrulli (strain AAC00-1) (Acidovorax citrulli)).